We begin with the raw amino-acid sequence, 349 residues long: Heat-inducible transcription repressor HrcA (349 aa).

This sequence belongs to the HrcA family.

Its function is as follows. Negative regulator of class I heat shock genes (grpE-dnaK-dnaJ and groELS operons). Prevents heat-shock induction of these operons. This Xylella fastidiosa (strain 9a5c) protein is Heat-inducible transcription repressor HrcA.